The following is a 227-amino-acid chain: Uracil-DNA glycosylase (227 aa).

The active-site Proton acceptor is the D65.

It belongs to the uracil-DNA glycosylase (UDG) superfamily. UNG family.

It is found in the cytoplasm. The catalysed reaction is Hydrolyzes single-stranded DNA or mismatched double-stranded DNA and polynucleotides, releasing free uracil.. Excises uracil residues from the DNA which can arise as a result of misincorporation of dUMP residues by DNA polymerase or due to deamination of cytosine. The polypeptide is Uracil-DNA glycosylase (Buchnera aphidicola subsp. Cinara cedri (strain Cc)).